A 156-amino-acid polypeptide reads, in one-letter code: Protein CROC-4 (156 aa).

The tract at residues 46–71 (RATSSTTDSSRAPSSPRPPGSTSHCG) is disordered. Residues 48 to 59 (TSSTTDSSRAPS) show a composition bias toward low complexity.

In terms of tissue distribution, expressed throughout the brain in the thalamus, subthalamic nucleus, corpus callosum, hippocampus, substantia nigra, caudate nucleus, and amygdala.

The protein resides in the nucleus. Functionally, may play a role in FOS signaling pathways involved in development and remodeling of neurons. Promotes transcription of the FOS promoter. This is Protein CROC-4 from Homo sapiens (Human).